The following is a 132-amino-acid chain: Histone H2A-alpha (132 aa).

The residue at position 2 (serine 2) is an N-acetylserine. 2 positions are modified to N6-acetyllysine: lysine 5 and lysine 9. Glutamine 106 bears the N5-methylglutamine mark. Serine 129 is subject to Phosphoserine. The short motif at 129–130 (SQ) is the [ST]-Q motif element.

It belongs to the histone H2A family. In terms of assembly, the nucleosome is a histone octamer containing two molecules each of H2A, H2B, H3 and H4 assembled in one H3-H4 heterotetramer and two H2A-H2B heterodimers. The octamer wraps approximately 147 bp of DNA. Interacts with mdb1 (via BRCT domain) in vitro; this interaction requires phosphorylation of this protein at the S/T-Q motif. In terms of processing, phosphorylated to form H2AS128ph (gamma-H2A) in response to DNA double-strand breaks (DSBs) generated by exogenous genotoxic agents and by stalled replication forks. Phosphorylation is dependent on the DNA damage checkpoint kinases rad3/ATR and tel1/ATM, spreads on either side of a detected DSB site and may mark the surrounding chromatin for recruitment of proteins required for DNA damage signaling and repair. Gamma-H2A is required for recruiting crb2, a modulator of DNA damage checkpoint signaling, to DSB sites. Gamma-H2A is removed from the DNA prior to the strand invasion-primer extension step of the repair process and subsequently dephosphorylated. Dephosphorylation is necessary for efficient recovery from the DNA damage checkpoint. Post-translationally, acetylated by esa1 to form H2AK4ac and H2AK7ac.

The protein resides in the nucleus. It is found in the chromosome. In terms of biological role, core component of nucleosome which plays a central role in DNA double strand break (DSB) repair. Nucleosomes wrap and compact DNA into chromatin, limiting DNA accessibility to the cellular machineries which require DNA as a template. Histones thereby play a central role in transcription regulation, DNA repair, DNA replication and chromosomal stability. DNA accessibility is regulated via a complex set of post-translational modifications of histones, also called histone code, and nucleosome remodeling. The chain is Histone H2A-alpha (hta1) from Schizosaccharomyces pombe (strain 972 / ATCC 24843) (Fission yeast).